The primary structure comprises 127 residues: Mitochondrial pyruvate carrier 2 (127 aa).

Over 2–40 (SAAGARGLRATYHRLLDKVELMLPEKLRPLYNHPAGPRT) the chain is Mitochondrial matrix. Residues 41 to 61 (VFFWAPIMKWGLVCAGLADMA) traverse the membrane as a helical segment. Topologically, residues 62-72 (RPAEKLSTAQS) are mitochondrial intermembrane. The helical transmembrane segment at 73 to 90 (AVLMATGFIWSRYSLVII) threads the bilayer. Over 91–95 (PKNWS) the chain is Mitochondrial matrix. A helical transmembrane segment spans residues 96 to 115 (LFAVNFFVGAAGASQLFRIW). The Mitochondrial intermembrane portion of the chain corresponds to 116–127 (RYNQELKAKAHK).

It belongs to the mitochondrial pyruvate carrier (MPC) (TC 2.A.105) family. Homodimer. Homooligomer. Forms heterodimers with MPC1 and MPC1L. The heterodimer is the more stable and dominant form.

Its subcellular location is the mitochondrion inner membrane. The catalysed reaction is pyruvate(out) + H(+)(out) = pyruvate(in) + H(+)(in). Its function is as follows. Mediates the uptake of pyruvate into mitochondria. This is Mitochondrial pyruvate carrier 2 (MPC2) from Homo sapiens (Human).